A 425-amino-acid polypeptide reads, in one-letter code: UPF0229 protein ETA_15540 (425 aa).

The disordered stretch occupies residues 60-111; it reads NEPSFHQGRGGERYRVHPGNDHFVQNDRVDRPQGGGAGGSGQGNAGKDGEGQ. Over residues 68 to 90 the composition is skewed to basic and acidic residues; it reads RGGERYRVHPGNDHFVQNDRVDR. Residues 92–105 are compositionally biased toward gly residues; sequence QGGGAGGSGQGNAG.

Belongs to the UPF0229 family.

The chain is UPF0229 protein ETA_15540 from Erwinia tasmaniensis (strain DSM 17950 / CFBP 7177 / CIP 109463 / NCPPB 4357 / Et1/99).